The sequence spans 739 residues: Eukaryotic translation initiation factor 3 subunit B (739 aa).

Residues Ala39–Asp125 form the RRM domain. WD repeat units follow at residues Arg191–Gln229, Pro231–Val288, Ser457–Ala498, Ile516–Glu559, and Asn574–Ser612.

Belongs to the eIF-3 subunit B family. Component of the eukaryotic translation initiation factor 3 (eIF-3) complex.

Its subcellular location is the cytoplasm. Its function is as follows. RNA-binding component of the eukaryotic translation initiation factor 3 (eIF-3) complex, which is involved in protein synthesis of a specialized repertoire of mRNAs and, together with other initiation factors, stimulates binding of mRNA and methionyl-tRNAi to the 40S ribosome. The eIF-3 complex specifically targets and initiates translation of a subset of mRNAs involved in cell proliferation. This chain is Eukaryotic translation initiation factor 3 subunit B, found in Coccidioides immitis (strain RS) (Valley fever fungus).